A 741-amino-acid chain; its full sequence is Oosporein cluster regulator OpS3 (741 aa).

Residues 16–39 are disordered; it reads GRPARGQSTTTRSRNTQQSAPTSQ. A compositionally biased stretch (low complexity) spans 20-34; the sequence is RGQSTTTRSRNTQQS. The segment at residues 44 to 69 is a DNA-binding region (zn(2)-C6 fungal-type); the sequence is CRRCRQHRIKCSEKPCEPCRANNSKC. The tract at residues 139 to 167 is disordered; it reads HPNTPNSCPSQSGDIRQQQIPCSQHASPA. A coiled-coil region spans residues 473–500; the sequence is TAGQSMARLSETIRQLETALDELPEQLL. A disordered region spans residues 501–528; that stretch reads TRHGSRTPTNNGQTHRSRPTCSTMPHTN. A compositionally biased stretch (polar residues) spans 506–528; it reads RTPTNNGQTHRSRPTCSTMPHTN.

Its subcellular location is the nucleus. Transcription factor involved in regulation of gene cluster that mediates the biosynthesis of oosporein, a metabolite required for fungal virulence that acts by evading host immunity to facilitate fungal multiplication in insects. Binds oosporein cluster genes at a conserved 5'-CGGA-3' motif with the exception of OpS5. The presence of this motif in the OpS3 promoter would suggest the formation of a positive feedback loop for self-activation. The sequence is that of Oosporein cluster regulator OpS3 from Beauveria bassiana (strain ARSEF 2860) (White muscardine disease fungus).